A 624-amino-acid polypeptide reads, in one-letter code: Na(+)/H(+) antiporter NhaA (624 aa).

The unknown stretch occupies residues 1–164 (MNPELPPNHL…TFFINGRRYD (164 aa)). Positions 165–624 (GPWDVRSLSE…NAQAEEEKNP (460 aa)) are na(+)/H(+) antiporter NhaA. 11 helical membrane passes run 199–219 (GIML…ALGP), 240–260 (LSLR…VVGL), 279–299 (LPIA…LILV), 319–339 (GWGV…AMMG), 348–368 (VFLT…VAIF), 371–391 (GELH…LALL), 407–427 (IVLW…GIIL), 497–517 (FLVL…TSVF), 521–541 (IPLM…GFIT), 565–585 (GAGA…SQAF), and 596–616 (IAIF…LWNA).

The protein belongs to the NhaA Na(+)/H(+) (TC 2.A.33) antiporter family.

The protein resides in the cell inner membrane. The enzyme catalyses Na(+)(in) + 2 H(+)(out) = Na(+)(out) + 2 H(+)(in). Functionally, na(+)/H(+) antiporter that extrudes sodium in exchange for external protons. The protein is Na(+)/H(+) antiporter NhaA of Nitrosospira multiformis (strain ATCC 25196 / NCIMB 11849 / C 71).